A 441-amino-acid chain; its full sequence is Argininosuccinate lyase (441 aa).

This sequence belongs to the lyase 1 family. Argininosuccinate lyase subfamily.

The protein resides in the cytoplasm. The enzyme catalyses 2-(N(omega)-L-arginino)succinate = fumarate + L-arginine. The protein operates within amino-acid biosynthesis; L-arginine biosynthesis; L-arginine from L-ornithine and carbamoyl phosphate: step 3/3. This Thermoanaerobacter pseudethanolicus (strain ATCC 33223 / 39E) (Clostridium thermohydrosulfuricum) protein is Argininosuccinate lyase.